The chain runs to 550 residues: Mitochondrial distribution and morphology protein 12 (550 aa).

An SMP-LTD domain is found at 1 to 550 (MSIELNWETL…VYPSFWTFLV (550 aa)). Disordered regions lie at residues 62 to 168 (ITDP…PQDL), 218 to 356 (PPQW…TKYR), and 474 to 493 (TLASPAGAAPGSDEKAGGNT). The segment covering 69–90 (FYEEDPDVDYDDEDEDVEETHD) has biased composition (acidic residues). Over residues 125-140 (VASSSSSSVGRGSAPR) the composition is skewed to low complexity. Composition is skewed to polar residues over residues 148 to 157 (PTKSNININT), 251 to 269 (PSHSRTSSTVSNADLQTAS), 278 to 289 (TPTSFLRSGQQT), and 296 to 323 (VSTLAPTSVGTSRPPTRDLTTTMSTAQE).

This sequence belongs to the MDM12 family. As to quaternary structure, component of the ER-mitochondria encounter structure (ERMES) or MDM complex, composed of MMM1, MDM10, MDM12 and MDM34. An MMM1 homodimer associates with one molecule of MDM12 on each side in a pairwise head-to-tail manner, and the SMP-LTD domains of MMM1 and MDM12 generate a continuous hydrophobic tunnel for phospholipid trafficking.

Its subcellular location is the mitochondrion outer membrane. The protein localises to the endoplasmic reticulum membrane. Functionally, component of the ERMES/MDM complex, which serves as a molecular tether to connect the endoplasmic reticulum (ER) and mitochondria. Components of this complex are involved in the control of mitochondrial shape and protein biogenesis, and function in nonvesicular lipid trafficking between the ER and mitochondria. MDM12 is required for the interaction of the ER-resident membrane protein MMM1 and the outer mitochondrial membrane-resident beta-barrel protein MDM10. The MDM12-MMM1 subcomplex functions in the major beta-barrel assembly pathway that is responsible for biogenesis of all mitochondrial outer membrane beta-barrel proteins, and acts in a late step after the SAM complex. The MDM10-MDM12-MMM1 subcomplex further acts in the TOM40-specific pathway after the action of the MDM12-MMM1 complex. Essential for establishing and maintaining the structure of mitochondria and maintenance of mtDNA nucleoids. The protein is Mitochondrial distribution and morphology protein 12 of Pyricularia oryzae (strain 70-15 / ATCC MYA-4617 / FGSC 8958) (Rice blast fungus).